A 571-amino-acid chain; its full sequence is OTU domain-containing protein 5 (571 aa).

Disordered stretches follow at residues Met-1–Gly-111 and Pro-146–Tyr-175. Over residues Pro-11 to Pro-30 the composition is skewed to pro residues. Positions Arg-32–Gly-47 are enriched in gly residues. Residues Ala-63–Pro-75 show a composition bias toward pro residues. At Ser-64 the chain carries Phosphoserine. The span at Ala-84 to Gln-97 shows a compositional bias: low complexity. A Phosphoserine modification is found at Ser-165. Phosphotyrosine is present on Tyr-175. Ser-177 bears the Phosphoserine mark. Thr-195 is subject to Phosphothreonine. Positions Phe-213–Pro-341 constitute an OTU domain. The segment at Met-218–Cys-224 is cys-loop. Asp-221 is a catalytic residue. Cys-224 acts as the Nucleophile in catalysis. The segment at Lys-273–Ile-283 is variable-loop. A Phosphoserine; by MTOR modification is found at Ser-328. The tract at residues Tyr-329 to His-334 is his-loop. The active site involves His-334. Phosphoserine is present on residues Ser-337 and Ser-375. Residues Ala-418–Gly-502 are disordered. Low complexity-rich tracts occupy residues Ala-430–Ser-443 and Ser-450–Pro-462. Ser-452 is subject to Phosphoserine. Position 507 is a phosphothreonine (Thr-507). Ser-508 bears the Phosphoserine; by MTOR mark.

It belongs to the peptidase C85 family. In terms of assembly, interacts with TRAF3. In terms of processing, phosphorylation at Ser-177 is required for deubiquitinating activity. Phosphorylation at Ser-328, Ser-337 and Ser-508 by MTOR promotes its activity. As to expression, expressed in various tissues, including the liver and placenta, as well as in peripheral blood leukocytes.

It is found in the nucleus. It catalyses the reaction Thiol-dependent hydrolysis of ester, thioester, amide, peptide and isopeptide bonds formed by the C-terminal Gly of ubiquitin (a 76-residue protein attached to proteins as an intracellular targeting signal).. Inhibited by N-ethyl-maleimide (NEM). Functionally, deubiquitinating enzyme that functions as a negative regulator of the innate immune system. Has peptidase activity towards 'Lys-48'- and 'Lys-63'-linked polyubiquitin chains. Can also cleave 'Lys-11'-linked ubiquitin chains (in vitro). Acts via TRAF3 deubiquitination and subsequent suppression of type I interferon (IFN) production. Controls neuroectodermal differentiation through cleaving 'Lys-48'-linked ubiquitin chains to counteract degradation of select chromatin regulators such as ARID1A, HDAC2 and HCF1. Acts as a positive regulator of mTORC1 and mTORC2 signaling following phosphorylation by MTOR: acts by mediating deubiquitination of BTRC, leading to its stability. The polypeptide is OTU domain-containing protein 5 (Homo sapiens (Human)).